The chain runs to 729 residues: Sodium-dependent neutral amino acid transporter B(0)AT2 (729 aa).

At 1-69 (MPKNSKVVKR…ARPAWNSKLQ (69 aa)) the chain is on the cytoplasmic side. A phosphoserine mark is found at Ser-25 and Ser-55. 3 helical membrane passes run 70–90 (YILA…FPYL), 98–117 (AYLL…LFFL), and 142–162 (GIGF…NVII). At 163–225 (GWSLFYFSQS…TSISESGGLN (63 aa)) the chain is on the extracellular side. N-linked (GlcNAc...) asparagine glycans are attached at residues Asn-187 and Asn-213. The next 4 membrane-spanning stretches (helical) occupy residues 226 to 244 (WKMT…LAMI), 253 to 270 (IMYF…CFLI), 306 to 323 (VFFA…FSSY), and 335 to 356 (VLVS…FAVL). Residues 357-452 (GFKANVINEK…FIAFTEAMTH (96 aa)) are Extracellular-facing. Asn-383 and Asn-394 each carry an N-linked (GlcNAc...) asparagine glycan. 5 helical membrane passes run 453–472 (FPAS…NLGL), 496–514 (ILTV…IFVQ), 530–550 (TLPL…VYGI), 571–592 (YMWK…IVNM), and 620–642 (VICI…IRRC). The Cytoplasmic segment spans residues 643–729 (NLIDDSSGNL…DMPDMPESDL (87 aa)). Phosphoserine is present on residues Ser-687, Ser-699, and Ser-701.

Belongs to the sodium:neurotransmitter symporter (SNF) (TC 2.A.22) family. SLC6A15 subfamily.

The protein localises to the membrane. The catalysed reaction is L-leucine(in) + Na(+)(in) = L-leucine(out) + Na(+)(out). The enzyme catalyses L-isoleucine(in) + Na(+)(in) = L-isoleucine(out) + Na(+)(out). It carries out the reaction L-methionine(in) + Na(+)(in) = L-methionine(out) + Na(+)(out). It catalyses the reaction L-proline(in) + Na(+)(in) = L-proline(out) + Na(+)(out). The catalysed reaction is L-alanine(in) + Na(+)(in) = L-alanine(out) + Na(+)(out). The enzyme catalyses L-asparagine(in) + Na(+)(in) = L-asparagine(out) + Na(+)(out). It carries out the reaction L-valine(in) + Na(+)(in) = L-valine(out) + Na(+)(out). It catalyses the reaction L-cysteine(in) + Na(+)(in) = L-cysteine(out) + Na(+)(out). The catalysed reaction is L-glutamine(in) + Na(+)(in) = L-glutamine(out) + Na(+)(out). The enzyme catalyses L-serine(in) + Na(+)(in) = L-serine(out) + Na(+)(out). It carries out the reaction L-threonine(in) + Na(+)(in) = L-threonine(out) + Na(+)(out). It catalyses the reaction L-pipecolate(in) + Na(+)(in) = L-pipecolate(out) + Na(+)(out). The catalysed reaction is L-phenylalanine(in) + Na(+)(in) = L-phenylalanine(out) + Na(+)(out). Its function is as follows. Functions as a sodium-dependent neutral amino acid transporter. Exhibits preference for the branched-chain amino acids, particularly leucine, valine and isoleucine and methionine. Can also transport low-affinity substrates such as alanine, phenylalanine, glutamine and pipecolic acid. Mediates the saturable, pH-sensitive and electrogenic cotransport of proline and sodium ions with a stoichiometry of 1:1. May have a role as transporter for neurotransmitter precursors into neurons. In contrast to other members of the neurotransmitter transporter family, does not appear to be chloride-dependent. The sequence is that of Sodium-dependent neutral amino acid transporter B(0)AT2 (SLC6A15) from Bos taurus (Bovine).